Reading from the N-terminus, the 328-residue chain is Embigin (328 aa).

The first 33 residues, 1-33 (MRSHTGLRALVAPGCSLLLLYLLAATRPDRAVG), serve as a signal peptide directing secretion. Residues 34-264 (DPADSAFTSL…VLSFMVPLKP (231 aa)) are Extracellular-facing. N-linked (GlcNAc...) asparagine glycosylation is found at N55, N62, N75, N100, N117, N189, N196, N214, and N219. Ig-like domains lie at 67–160 (EQTR…RVPK) and 159–254 (PKVH…IKLV). 2 disulfide bridges follow: C88/C144 and C180/C238. A helical membrane pass occupies residues 265-285 (FLAIIAEVILLVAIILLCEVY). Residues 286 to 328 (TQKKKNDPDDGKEFEQIEQLKSDDSNGIENNVPRYRKTDSGDQ) lie on the Cytoplasmic side of the membrane. Positions 289 to 309 (KKNDPDDGKEFEQIEQLKSDD) are enriched in basic and acidic residues. Residues 289 to 328 (KKNDPDDGKEFEQIEQLKSDDSNGIENNVPRYRKTDSGDQ) are disordered. Position 310 is a phosphoserine (S310).

In terms of assembly, interacts with SLC16A1, SLC16A6 and SLC16A7. In terms of processing, N-glycosylated. Detected in prostate, mammary gland and erythrocytes (at protein level). Detected in testis, brain, prostate, heart, kidney, liver, mammary gland and lung.

Its subcellular location is the cell membrane. It localises to the synapse. In terms of biological role, plays a role in the outgrowth of motoneurons and in the formation of neuromuscular junctions. Following muscle denervation, promotes nerve terminal sprouting and the formation of additional acetylcholine receptor clusters at synaptic sites without affecting terminal Schwann cell number or morphology. Delays the retraction of terminal sprouts following re-innervation of denervated endplates. Plays a role in targeting the monocarboxylate transporters SLC16A1, SLC16A6 and SLC16A7 to the cell membrane. The polypeptide is Embigin (Emb) (Rattus norvegicus (Rat)).